Reading from the N-terminus, the 196-residue chain is Pyridoxal 5'-phosphate synthase subunit PdxT (196 aa).

47-49 (GES) provides a ligand contact to L-glutamine. Residue cysteine 79 is the Nucleophile of the active site. Residues arginine 106 and 134–135 (IR) each bind L-glutamine. Active-site charge relay system residues include histidine 170 and glutamate 172.

Belongs to the glutaminase PdxT/SNO family. In the presence of PdxS, forms a dodecamer of heterodimers. Only shows activity in the heterodimer.

The enzyme catalyses aldehydo-D-ribose 5-phosphate + D-glyceraldehyde 3-phosphate + L-glutamine = pyridoxal 5'-phosphate + L-glutamate + phosphate + 3 H2O + H(+). The catalysed reaction is L-glutamine + H2O = L-glutamate + NH4(+). Its pathway is cofactor biosynthesis; pyridoxal 5'-phosphate biosynthesis. Functionally, catalyzes the hydrolysis of glutamine to glutamate and ammonia as part of the biosynthesis of pyridoxal 5'-phosphate. The resulting ammonia molecule is channeled to the active site of PdxS. This chain is Pyridoxal 5'-phosphate synthase subunit PdxT, found in Bacillus cereus (strain B4264).